A 147-amino-acid polypeptide reads, in one-letter code: 6-pyruvoyl tetrahydrobiopterin synthase (147 aa).

Histidine 26 contributes to the Zn(2+) binding site. Cysteine 45 (proton acceptor) is an active-site residue. The Zn(2+) site is built by histidine 51 and histidine 53. Catalysis depends on charge relay system residues histidine 92 and glutamate 136.

This sequence belongs to the PTPS family. As to quaternary structure, homohexamer formed of two homotrimers in a head to head fashion. Requires Zn(2+) as cofactor.

The catalysed reaction is 7,8-dihydroneopterin 3'-triphosphate = 6-pyruvoyl-5,6,7,8-tetrahydropterin + triphosphate + H(+). Its pathway is cofactor biosynthesis; tetrahydrobiopterin biosynthesis; tetrahydrobiopterin from 7,8-dihydroneopterin triphosphate: step 1/3. Functionally, involved in the biosynthesis of tetrahydrobiopterin, an essential cofactor of aromatic amino acid hydroxylases. Catalyzes the transformation of 7,8-dihydroneopterin triphosphate into 6-pyruvoyl tetrahydropterin. The chain is 6-pyruvoyl tetrahydrobiopterin synthase (pts) from Poecilia reticulata (Guppy).